Here is a 376-residue protein sequence, read N- to C-terminus: Enoyl-[acyl-carrier-protein] reductase, mitochondrial (376 aa).

The N-terminal 12 residues, 1–12 (MLRTLRTSQLAR), are a transit peptide targeting the mitochondrion. Tyrosine 79 serves as the catalytic Proton donor. NADP(+) is bound by residues asparagine 160, 183 to 186 (NSGV), 206 to 208 (RDR), 277 to 280 (YGGM), 302 to 304 (YWL), and lysine 368.

Belongs to the zinc-containing alcohol dehydrogenase family. Quinone oxidoreductase subfamily. Homodimer.

It localises to the mitochondrion matrix. It catalyses the reaction a 2,3-saturated acyl-[ACP] + NADP(+) = a (2E)-enoyl-[ACP] + NADPH + H(+). In terms of biological role, catalyzes the NADPH-dependent reduction of trans-2-enoyl thioesters in mitochondrial fatty acid synthesis (fatty acid synthesis type II). Fatty acid chain elongation in mitochondria uses acyl carrier protein (ACP) as an acyl group carrier, but the enzyme accepts both ACP and CoA thioesters as substrates in vitro. Required for respiration and the maintenance of the mitochondrial compartment. The protein is Enoyl-[acyl-carrier-protein] reductase, mitochondrial (ETR1) of Yarrowia lipolytica (strain CLIB 122 / E 150) (Yeast).